Here is a 943-residue protein sequence, read N- to C-terminus: Glycine dehydrogenase (decarboxylating) (943 aa).

The residue at position 695 (K695) is an N6-(pyridoxal phosphate)lysine.

The protein belongs to the GcvP family. The glycine cleavage system is composed of four proteins: P, T, L and H. Pyridoxal 5'-phosphate is required as a cofactor.

The enzyme catalyses N(6)-[(R)-lipoyl]-L-lysyl-[glycine-cleavage complex H protein] + glycine + H(+) = N(6)-[(R)-S(8)-aminomethyldihydrolipoyl]-L-lysyl-[glycine-cleavage complex H protein] + CO2. In terms of biological role, the glycine cleavage system catalyzes the degradation of glycine. The P protein binds the alpha-amino group of glycine through its pyridoxal phosphate cofactor; CO(2) is released and the remaining methylamine moiety is then transferred to the lipoamide cofactor of the H protein. In Jannaschia sp. (strain CCS1), this protein is Glycine dehydrogenase (decarboxylating).